A 520-amino-acid polypeptide reads, in one-letter code: Cobyric acid synthase (520 aa).

One can recognise a GATase cobBQ-type domain in the interval 254 to 465 (ELDIAVVRLP…IHGILDNDGL (212 aa)). Residue Cys335 is the Nucleophile of the active site. His457 is a catalytic residue.

This sequence belongs to the CobB/CobQ family. CobQ subfamily.

It participates in cofactor biosynthesis; adenosylcobalamin biosynthesis. Catalyzes amidations at positions B, D, E, and G on adenosylcobyrinic A,C-diamide. NH(2) groups are provided by glutamine, and one molecule of ATP is hydrogenolyzed for each amidation. The chain is Cobyric acid synthase from Sorangium cellulosum (strain So ce56) (Polyangium cellulosum (strain So ce56)).